Consider the following 264-residue polypeptide: Major prion protein (264 aa).

A signal peptide spans 1-24; sequence MVKSHIGSWILVLFVAMWSDVGLC. The segment at 25–241 is interaction with GRB2, ERI3 and SYN1; it reads KKRPKPGGGW…ESQAYYQRGA (217 aa). A disordered region spans residues 28–118; it reads PKPGGGWNTG…QWNKPSKPKT (91 aa). Low complexity predominate over residues 37-54; it reads GGSRYPGPGSPGGNRYPP. 6 tandem repeats follow at residues 54-62, 63-70, 71-78, 79-86, 87-94, and 95-103. The interval 54–103 is 6 X 8 AA tandem repeats of P-H-G-G-G-W-G-Q; that stretch reads PQGGGGWGQPHGGGWGQPHGGGWGQPHGGGWGQPHGGGWGQPHGGGGWGQ. The segment covering 55–107 has biased composition (gly residues); it reads QGGGGWGQPHGGGWGQPHGGGWGQPHGGGWGQPHGGGWGQPHGGGGWGQGGTH. His72, Gly73, Gly74, His80, Gly81, Gly82, His88, Gly89, Gly90, His96, and Gly98 together coordinate Cu(2+). Cys190 and Cys225 are disulfide-bonded. N-linked (GlcNAc...) asparagine glycans are attached at residues Asn192 and Asn208. The GPI-anchor amidated alanine moiety is linked to residue Ala241. The propeptide at 242 to 264 is removed in mature form; that stretch reads SVILFSSPPVILLISFLIFLIVG.

Belongs to the prion family. In terms of assembly, monomer and homodimer. Has a tendency to aggregate into amyloid fibrils containing a cross-beta spine, formed by a steric zipper of superposed beta-strands. Soluble oligomers may represent an intermediate stage on the path to fibril formation. Copper binding may promote oligomerization. Interacts with GRB2, APP, ERI3/PRNPIP and SYN1. Mislocalized cytosolically exposed PrP interacts with MGRN1; this interaction alters MGRN1 subcellular location and causes lysosomal enlargement. Interacts with KIAA1191.

Its subcellular location is the cell membrane. The protein localises to the golgi apparatus. Its function is as follows. Its primary physiological function is unclear. Has cytoprotective activity against internal or environmental stresses. May play a role in neuronal development and synaptic plasticity. May be required for neuronal myelin sheath maintenance. May play a role in iron uptake and iron homeostasis. Soluble oligomers are toxic to cultured neuroblastoma cells and induce apoptosis (in vitro). Association with GPC1 (via its heparan sulfate chains) targets PRNP to lipid rafts. Also provides Cu(2+) or Zn(2+) for the ascorbate-mediated GPC1 deaminase degradation of its heparan sulfate side chains. This Ailuropoda melanoleuca (Giant panda) protein is Major prion protein (PRNP).